Here is a 643-residue protein sequence, read N- to C-terminus: Threonine--tRNA ligase (643 aa).

A TGS domain is found at 1–61 (MPIITLPDGS…SEDSSLEIIT (61 aa)). The catalytic stretch occupies residues 243-534 (DHRRIGKALD…ITEEYAGFFP (292 aa)). Positions 334, 385, and 511 each coordinate Zn(2+).

This sequence belongs to the class-II aminoacyl-tRNA synthetase family. Homodimer. Zn(2+) serves as cofactor.

The protein resides in the cytoplasm. The enzyme catalyses tRNA(Thr) + L-threonine + ATP = L-threonyl-tRNA(Thr) + AMP + diphosphate + H(+). Its function is as follows. Catalyzes the attachment of threonine to tRNA(Thr) in a two-step reaction: L-threonine is first activated by ATP to form Thr-AMP and then transferred to the acceptor end of tRNA(Thr). Also edits incorrectly charged L-seryl-tRNA(Thr). In Actinobacillus pleuropneumoniae serotype 7 (strain AP76), this protein is Threonine--tRNA ligase.